Consider the following 263-residue polypeptide: Tryptophan 2,3-dioxygenase (263 aa).

Substrate-binding positions include 32–36 (FIVIH), Tyr94, and Arg98. Residue His221 coordinates heme. Position 235 (Thr235) interacts with substrate.

Belongs to the tryptophan 2,3-dioxygenase family. As to quaternary structure, homotetramer. Heme is required as a cofactor.

The catalysed reaction is L-tryptophan + O2 = N-formyl-L-kynurenine. It participates in amino-acid degradation; L-tryptophan degradation via kynurenine pathway; L-kynurenine from L-tryptophan: step 1/2. In terms of biological role, heme-dependent dioxygenase that catalyzes the oxidative cleavage of the L-tryptophan (L-Trp) pyrrole ring and converts L-tryptophan to N-formyl-L-kynurenine. Catalyzes the oxidative cleavage of the indole moiety. The sequence is that of Tryptophan 2,3-dioxygenase from Caulobacter vibrioides (strain ATCC 19089 / CIP 103742 / CB 15) (Caulobacter crescentus).